Reading from the N-terminus, the 388-residue chain is Putative [LysW]-aminoadipate semialdehyde/glutamate semialdehyde transaminase (388 aa).

Pyridoxal 5'-phosphate contacts are provided by residues 100-101 (GT) and Phe-127. A substrate-binding site is contributed by Arg-130. Residue 211 to 214 (DEIQ) coordinates pyridoxal 5'-phosphate. Lys-240 bears the N6-(pyridoxal phosphate)lysine mark. Ser-268 provides a ligand contact to substrate. Thr-269 contributes to the pyridoxal 5'-phosphate binding site.

It belongs to the class-III pyridoxal-phosphate-dependent aminotransferase family. LysJ subfamily. As to quaternary structure, homodimer. Pyridoxal 5'-phosphate serves as cofactor.

It localises to the cytoplasm. It carries out the reaction [amino-group carrier protein]-C-terminal-gamma-(L-lysyl)-L-glutamate + 2-oxoglutarate = [amino-group carrier protein]-C-terminal-N-(1-carboxy-5-oxopentan-1-yl)-L-glutamine + L-glutamate. The catalysed reaction is [amino-group carrier protein]-C-terminal-gamma-(L-ornithyl)-L-glutamate + 2-oxoglutarate = [amino-group carrier protein]-C-terminal-gamma-(L-glutamyl-5-semialdehyde)-L-glutamate + L-glutamate. It functions in the pathway amino-acid biosynthesis; L-lysine biosynthesis via AAA pathway; L-lysine from L-alpha-aminoadipate (Thermus route): step 4/5. Its pathway is amino-acid biosynthesis; L-arginine biosynthesis. In terms of biological role, involved in both the arginine and lysine biosynthetic pathways. The sequence is that of Putative [LysW]-aminoadipate semialdehyde/glutamate semialdehyde transaminase from Aeropyrum pernix (strain ATCC 700893 / DSM 11879 / JCM 9820 / NBRC 100138 / K1).